A 399-amino-acid polypeptide reads, in one-letter code: Fe-coproporphyrin III synthase (399 aa).

The region spanning 36–253 (KDKKPVVVWN…TRKLHEKGFP (218 aa)) is the Radical SAM core domain. [4Fe-4S] cluster-binding residues include Cys-50, Cys-54, and Cys-57.

It belongs to the radical SAM superfamily. The cofactor is [4Fe-4S] cluster.

It carries out the reaction 12,18-didecarboxysiroheme + 2 AH2 + 2 S-adenosyl-L-methionine = Fe-coproporphyrin III + 2 5'-deoxyadenosine + 2 L-methionine + 2 acetate + 2 A + 2 H(+). Its pathway is porphyrin-containing compound metabolism; protoheme biosynthesis. In terms of biological role, involved in siroheme-dependent heme b biosynthesis. Catalyzes the conversion of didecarboxysiroheme into Fe-coproporphyrin III by oxidative loss of two acetic acid side chains. This chain is Fe-coproporphyrin III synthase, found in Methanosarcina barkeri (strain Fusaro / DSM 804).